Reading from the N-terminus, the 187-residue chain is UPF0301 protein VC_0467 (187 aa).

This sequence belongs to the UPF0301 (AlgH) family.

This Vibrio cholerae serotype O1 (strain ATCC 39315 / El Tor Inaba N16961) protein is UPF0301 protein VC_0467.